The chain runs to 73 residues: UPF0270 protein SG2298 (73 aa).

Belongs to the UPF0270 family.

This Sodalis glossinidius (strain morsitans) protein is UPF0270 protein SG2298.